Reading from the N-terminus, the 265-residue chain is MADS-box protein JOINTLESS (265 aa).

The region spanning 3-57 is the MADS-box domain; sequence REKIQIKKIDNSTARQVTFSKRRRGLFKKAEELSVLCDADVALIIFSSTGKLFDY. The K-box domain occupies 87–177; it reads QLVENSNYSR…RQQVMEISNN (91 aa). The disordered stretch occupies residues 196 to 232; sequence ENGFNNNNNEDGQSSESVTNPCNSIDPPPQDDDSSDT. The span at 205 to 218 shows a compositional bias: polar residues; the sequence is EDGQSSESVTNPCN.

In terms of tissue distribution, widely expressed with highest levels in shoot tips and axillary buds. Also found in fully developed pedicels and flowers.

It is found in the nucleus. In terms of biological role, putative transcription factor that coordinates gene expression underlying the differentiation of the pedicel abscission zone. May also be involved in the maintenance of the inflorescence meristem state. The protein is MADS-box protein JOINTLESS (J) of Solanum lycopersicum (Tomato).